The following is a 109-amino-acid chain: Large ribosomal subunit protein eL30 (109 aa).

The protein belongs to the eukaryotic ribosomal protein eL30 family. Component of the large ribosomal subunit (LSU). Mature N.crassa ribosomes consist of a small (40S) and a large (60S) subunit. The 40S small subunit contains 1 molecule of ribosomal RNA (18S rRNA) and at least 32 different proteins. The large 60S subunit contains 3 rRNA molecules (26S, 5.8S and 5S rRNA) and at least 42 different proteins.

It localises to the cytoplasm. In terms of biological role, component of the ribosome, a large ribonucleoprotein complex responsible for the synthesis of proteins in the cell. The small ribosomal subunit (SSU) binds messenger RNAs (mRNAs) and translates the encoded message by selecting cognate aminoacyl-transfer RNA (tRNA) molecules. The large subunit (LSU) contains the ribosomal catalytic site termed the peptidyl transferase center (PTC), which catalyzes the formation of peptide bonds, thereby polymerizing the amino acids delivered by tRNAs into a polypeptide chain. The nascent polypeptides leave the ribosome through a tunnel in the LSU and interact with protein factors that function in enzymatic processing, targeting, and the membrane insertion of nascent chains at the exit of the ribosomal tunnel. This Neurospora crassa (strain ATCC 24698 / 74-OR23-1A / CBS 708.71 / DSM 1257 / FGSC 987) protein is Large ribosomal subunit protein eL30 (rpl-30).